Here is a 290-residue protein sequence, read N- to C-terminus: Endoplasmic reticulum-Golgi intermediate compartment protein 1 (290 aa).

Over 1 to 26 (MPFDFRRFDIYRKVPKDLTQPTYTGA) the chain is Cytoplasmic. The chain crosses the membrane as a helical span at residues 27–47 (IISICCCLFILFLFLSELTGF). The Lumenal segment spans residues 48 to 254 (ITTEVVNELY…RRQPLYRFIT (207 aa)). An N-linked (GlcNAc...) asparagine glycan is attached at asparagine 74. The chain crosses the membrane as a helical span at residues 255 to 275 (TICAIIGGTFTVAGILDSCIF). At 276-290 (TASEAWKKIQLGKIH) the chain is on the cytoplasmic side.

The protein belongs to the ERGIC family. In terms of assembly, may form a heteromeric complex composed of ERGIC1, ERGIC2 and ERGIC3. Within the complex, the interaction with ERGIC3 is direct. Interacts with ERGIC3/ERV46. In terms of processing, N-glycosylated.

It localises to the endoplasmic reticulum membrane. It is found in the endoplasmic reticulum-Golgi intermediate compartment membrane. Its subcellular location is the golgi apparatus membrane. In terms of biological role, possible role in transport between endoplasmic reticulum and Golgi. This is Endoplasmic reticulum-Golgi intermediate compartment protein 1 (Ergic1) from Mus musculus (Mouse).